A 138-amino-acid chain; its full sequence is Holo-[acyl-carrier-protein] synthase (138 aa).

The Mg(2+) site is built by Asp8 and Glu54.

The protein belongs to the P-Pant transferase superfamily. AcpS family. Requires Mg(2+) as cofactor.

Its subcellular location is the cytoplasm. The enzyme catalyses apo-[ACP] + CoA = holo-[ACP] + adenosine 3',5'-bisphosphate + H(+). Functionally, transfers the 4'-phosphopantetheine moiety from coenzyme A to a Ser of acyl-carrier-protein. This chain is Holo-[acyl-carrier-protein] synthase, found in Roseiflexus sp. (strain RS-1).